The following is a 161-amino-acid chain: MAEQNQRTNTPDNGSEFAIQRLYIKDLSFEAPRSPQVFLEEWQPELNMDLATKVNDLGEDNHEVVLTVTVTVTMKESHIFLAEVQQGGIFTIKNFPKEEMRPMLGSFCPNILYPYAREAITDMVVRGGFPQLYLAPVNFDALFEQHEQSEEGNSGTEDRVH.

The protein belongs to the SecB family. In terms of assembly, homotetramer, a dimer of dimers. One homotetramer interacts with 1 SecA dimer.

The protein resides in the cytoplasm. One of the proteins required for the normal export of preproteins out of the cell cytoplasm. It is a molecular chaperone that binds to a subset of precursor proteins, maintaining them in a translocation-competent state. It also specifically binds to its receptor SecA. The sequence is that of Protein-export protein SecB from Coxiella burnetii (strain CbuG_Q212) (Coxiella burnetii (strain Q212)).